The sequence spans 163 residues: Shikimate kinase (163 aa).

Residue 10–15 (GVGKTT) coordinates ATP. Threonine 14 is a binding site for Mg(2+). Substrate contacts are provided by aspartate 28, arginine 52, and glycine 75. Arginine 116 serves as a coordination point for ATP. Arginine 134 serves as a coordination point for substrate. Arginine 151 is an ATP binding site.

The protein belongs to the shikimate kinase family. As to quaternary structure, monomer. Mg(2+) is required as a cofactor.

It localises to the cytoplasm. The enzyme catalyses shikimate + ATP = 3-phosphoshikimate + ADP + H(+). Its pathway is metabolic intermediate biosynthesis; chorismate biosynthesis; chorismate from D-erythrose 4-phosphate and phosphoenolpyruvate: step 5/7. Functionally, catalyzes the specific phosphorylation of the 3-hydroxyl group of shikimic acid using ATP as a cosubstrate. The protein is Shikimate kinase of Streptococcus pyogenes serotype M4 (strain MGAS10750).